A 201-amino-acid polypeptide reads, in one-letter code: Putative manganese efflux pump MntP 2 (201 aa).

Transmembrane regions (helical) follow at residues 3 to 23 (LISV…VSIT), 39 to 59 (IGLF…SIGI), 65 to 85 (IAAL…GKMI), 116 to 136 (LILL…SFAF), 141 to 161 (IINT…IGVM), and 176 to 196 (ILGG…HTNI).

It belongs to the MntP (TC 9.B.29) family.

It is found in the cell membrane. Probably functions as a manganese efflux pump. This chain is Putative manganese efflux pump MntP 2, found in Clostridium botulinum (strain Hall / ATCC 3502 / NCTC 13319 / Type A).